The sequence spans 1089 residues: Electroneutral sodium bicarbonate exchanger 1 (1089 aa).

The Extracellular segment spans residues 1 to 476; that stretch reads MPAGSNEPDG…DYRDALSLQC (476 aa). The segment at 55 to 90 is disordered; sequence LGRQSHRHHRTHGQKHRRRGGRGKGASQGEEGLEAL. Residues 58–76 show a composition bias toward basic residues; it reads QSHRHHRTHGQKHRRRGGR. Residues 477–497 traverse the membrane as a helical segment; it reads LASFLFLYCACMSPVITFGGL. Residues 498–505 lie on the Cytoplasmic side of the membrane; the sequence is LGEATEGR. Residues 506–526 traverse the membrane as a helical segment; that stretch reads ISAIESLFGASMTGIAYSLFA. Residues 527-563 are Extracellular-facing; it reads GQPLTILGSTGPVLVFEKILFKFCKDYALSYLSLRAL. The helical transmembrane segment at 564–584 threads the bilayer; it reads IGLWTAFLCIVLVATDASSLV. Residues 585–593 lie on the Cytoplasmic side of the membrane; that stretch reads CYITRFTEE. A helical transmembrane segment spans residues 594-614; sequence AFASLICIIFIYEAIEKLIHL. Residues 615 to 685 lie on the Extracellular side of the membrane; it reads AETYPIHMHS…EFMGSACGHH (71 aa). 2 cysteine pairs are disulfide-bonded: Cys-634–Cys-682 and Cys-636–Cys-670. A glycan (N-linked (GlcNAc) asparagine) is linked at Asn-644. A helical transmembrane segment spans residues 686–706; sequence GPYTPDVLFWSCILFFATFIV. The Cytoplasmic portion of the chain corresponds to 707–729; it reads SSTLKTFKTSRYFPTRVRSMVSD. The chain crosses the membrane as a helical span at residues 730 to 750; the sequence is FAVFLTIFTMVVLDFLIGVPS. Over 751 to 776 the chain is Extracellular; that stretch reads PKLQVPNVFKPTRDDRGWFINPIGPN. The chain crosses the membrane as a helical span at residues 777-797; the sequence is PWWTVIAAIIPALLCTILIFM. Topologically, residues 798–822 are cytoplasmic; the sequence is DQQITAVIINRKEHKLKKGCGYHLD. The chain crosses the membrane as a helical span at residues 823–843; the sequence is LLMVAVMLGVCSIMGLPWFVA. The Extracellular segment spans residues 844 to 879; it reads ATVLSITHVNSLKLESECSAPGEQPKFLGIREQRVT. The chain crosses the membrane as a helical span at residues 880-900; the sequence is GLMIFVLMGCSVFMTAVLKFI. At 901–902 the chain is on the cytoplasmic side; that stretch reads PM. A helical membrane pass occupies residues 903–923; that stretch reads PVLYGVFLYMGVSSLQGIQFF. Residues 924 to 960 are Extracellular-facing; it reads DRLKLFGMPAKHQPDFIYLRHVPLRKVHLFTLVQLTC. A helical transmembrane segment spans residues 961–981; sequence LVLLWVIKASPAAIVFPMMVL. Residues 982-1089 are Cytoplasmic-facing; the sequence is ALVFVRKVMD…GNTKEKSPFN (108 aa).

It belongs to the anion exchanger (TC 2.A.31) family. In terms of assembly, homodimer. Expressed in the hippocampal neurons (at protein level). Highly expressed in brain with lower levels in lung, kidney and heart. In the kidney, there is high expression in the inner medulla, localized to the inner medullary collecting duct. In the brain, there seems to be three transcripts each having a different expression pattern. The smaller 3kb transcript has highest expression levels in the thalamus and the largest 9.5kb transcript has highest levels in the substantia nigra. The middle transcript of 4.4kb, which is also the main transcript in kidney, is highly expressed in thalamus. Hence, the highest levels are observed in the thalamus, amygdala and caudate nucleus and very low expression was seen in the corpus callosum.

It localises to the cell membrane. The protein localises to the apical cell membrane. It is found in the basolateral cell membrane. Its subcellular location is the cytoplasmic vesicle. The protein resides in the secretory vesicle. It localises to the synaptic vesicle membrane. It catalyses the reaction 2 hydrogencarbonate(out) + chloride(in) + Na(+)(out) = 2 hydrogencarbonate(in) + chloride(out) + Na(+)(in). Mediates electroneutral sodium- and carbonate-dependent chloride-HCO3(-) exchange with a Na(+):HCO3(-) stoichiometry of 2:1. Plays a major role in pH regulation in neurons. Mediates sodium reabsorption in the renal cortical collecting ducts. This chain is Electroneutral sodium bicarbonate exchanger 1, found in Mus musculus (Mouse).